The sequence spans 229 residues: Potassium/proton antiporter CemA (229 aa).

3 helical membrane passes run 6–26 (AFIP…ISLC), 107–127 (ILHF…SFWG), and 189–209 (ILSG…KYWI).

It belongs to the CemA family.

Its subcellular location is the plastid. The protein resides in the chloroplast inner membrane. The enzyme catalyses K(+)(in) + H(+)(out) = K(+)(out) + H(+)(in). In terms of biological role, contributes to K(+)/H(+) antiport activity by supporting proton efflux to control proton extrusion and homeostasis in chloroplasts in a light-dependent manner to modulate photosynthesis. Prevents excessive induction of non-photochemical quenching (NPQ) under continuous-light conditions. Indirectly promotes efficient inorganic carbon uptake into chloroplasts. The protein is Potassium/proton antiporter CemA of Arabis hirsuta (Hairy rock-cress).